Reading from the N-terminus, the 409-residue chain is MDLKMLLIFTAFLLPAVLGFPIQDNYENSTATSESTQVTTEESIYDSPSPTETDSEDDVIFNRILEVNKDSSRYLQEGDIVPRRSRSAFNCRNCYWPQSMDGIVRIPYVLDPTYEENHVRGILEAMAEFETLTCINFVKRKTERDYLIIRSADGCWSNYGKVGGGQTVSVMKGGCMWKGIIQHELDHALGFLHEHSRSDRDKYVKIMWEYISPACRPDFRKFENSNNLGLPYDYSSVMHYGPHTFTNTTGKATIVPVPDGSVHIGQRLGLSNLDVAKINKLYNCSRCSTIIDAAFGSLKSANYPRNYSDNTNCVWLIRTRSRKISLHFRDFDLRRTRGCQGDYVKVYDGSSKYSPVLMNKTCGSQIPTDVVSSSSLMLIEFVTDGRDTASGFQATFTSARMQRRFNTRN.

Residues 1–19 form the signal peptide; it reads MDLKMLLIFTAFLLPAVLG. Residues 20 to 86 constitute a propeptide that is removed on maturation; sequence FPIQDNYENS…EGDIVPRRSR (67 aa). Residues 30–42 show a composition bias toward low complexity; it reads TATSESTQVTTEE. Residues 30–55 are disordered; that stretch reads TATSESTQVTTEESIYDSPSPTETDS. One can recognise a Peptidase M12A domain in the interval 87–285; it reads SAFNCRNCYW…AKINKLYNCS (199 aa). Intrachain disulfides connect Cys91–Cys94, Cys134–Cys284, Cys155–Cys175, Cys287–Cys313, and Cys339–Cys362. Residue His183 coordinates Zn(2+). Residue Glu184 is part of the active site. Residues His187 and His193 each coordinate Zn(2+). Residues 287–399 enclose the CUB domain; that stretch reads CSTIIDAAFG…SGFQATFTSA (113 aa).

Zn(2+) is required as a cofactor.

Its subcellular location is the cytoplasm. The protein resides in the cell membrane. It localises to the cytoplasmic vesicle. The protein localises to the secretory vesicle. It is found in the cortical granule. Functionally, probable oocyte-specific oolemmal receptor involved in sperm and egg adhesion and fertilization. Protease which may play a role in the breaking down of the vitelline membrane (days 0-5) and possibly, in the digestion of the egg white (days 9-12). This is Astacin-like metalloendopeptidase from Coturnix japonica (Japanese quail).